Here is a 451-residue protein sequence, read N- to C-terminus: Chromosomal replication initiator protein DnaA (451 aa).

The domain I, interacts with DnaA modulators stretch occupies residues 1-73 (MNAHPKEIWE…IRSLQMVTSQ (73 aa)). Residues 73–112 (QKYNVKFLISSELPEEFLTLDTINEQNIKGSIIVSDEMSA) form a domain II region. Positions 113–329 (MLNPKYTFTS…GALIRIVAFS (217 aa)) are domain III, AAA+ region. ATP is bound by residues Gly157, Gly159, Lys160, and Thr161. Residues 330 to 451 (SLTNKEISVD…NDLTKRLDQQ (122 aa)) form a domain IV, binds dsDNA region.

Belongs to the DnaA family. Oligomerizes as a right-handed, spiral filament on DNA at oriC.

The protein resides in the cytoplasm. Functionally, plays an essential role in the initiation and regulation of chromosomal replication. ATP-DnaA binds to the origin of replication (oriC) to initiate formation of the DNA replication initiation complex once per cell cycle. Binds the DnaA box (a 9 base pair repeat at the origin) and separates the double-stranded (ds)DNA. Forms a right-handed helical filament on oriC DNA; dsDNA binds to the exterior of the filament while single-stranded (ss)DNA is stabiized in the filament's interior. The ATP-DnaA-oriC complex binds and stabilizes one strand of the AT-rich DNA unwinding element (DUE), permitting loading of DNA polymerase. After initiation quickly degrades to an ADP-DnaA complex that is not apt for DNA replication. Binds acidic phospholipids. This is Chromosomal replication initiator protein DnaA from Clostridium kluyveri (strain NBRC 12016).